The following is a 226-amino-acid chain: Large ribosomal subunit protein uL1 (226 aa).

Belongs to the universal ribosomal protein uL1 family. As to quaternary structure, part of the 50S ribosomal subunit.

Functionally, binds directly to 23S rRNA. The L1 stalk is quite mobile in the ribosome, and is involved in E site tRNA release. Its function is as follows. Protein L1 is also a translational repressor protein, it controls the translation of the L11 operon by binding to its mRNA. The protein is Large ribosomal subunit protein uL1 of Mycoplasmoides gallisepticum (strain R(low / passage 15 / clone 2)) (Mycoplasma gallisepticum).